The chain runs to 630 residues: MENSTTTISREELEELQEAFNKIDIDNSGYVSDYELQDLFKEASLPLPGYKVREIVEKILVVADNNKDGKISFEEFVSLMQELKSKDISKTFRKIINKREGITAIGGTSSISSEGTQHSYSEEEKVAFVNWINKALENDADCSHLLPMNPNDGSLFKSLADGILLCKMINLSEPDTIDERAINKKKLTPFTVSENLNLALNSASAIGCTVVNIGAQDLKEGKPHLVLGLLWQIIKVGLFADIEISRNEALIALLKDGEDLEELMKLSPEELLLRWVNYHLTNAGWRTINNFSQDIKDSKAYFHLLNQIAPKGDRDDGPAVAIDLSGFNEKNDLKRAGFMLQEADKLGCRQFVTPADVVSGNPKLNLAFVANLFNTYPCLHKPDNNDIDLNLLEGESKEERTFRNWMNSLGVNPYINHLYSDLADALVIFQLYEMIRVPVNWSQVNKPPYPALGGNMKKIENCNYAVELGKNEAKFSLVGIAGQDLNEGNATLTLALVWQLMRRYTLKVLSDLGEGEKVTDDIIIKWVNQTLKSANKSTSISSFKDKSISTSLPVLDLIDAIAPNAVRQEMIKREHLTDEDKLNNAKYAISVARKIGARIYALPDDLVEVKPKMVMTVFACLMGKGLNRLK.

Residue Met1 is modified to N-acetylmethionine. 2 consecutive EF-hand domains span residues 11–46 and 51–86; these read EELE…ASLP and KVRE…LKSK. Asp24, Asp26, Ser28, Tyr30, Glu35, Asp64, Asn66, Asp68, Lys70, and Glu75 together coordinate Ca(2+). Actin-binding regions lie at residues 108–381 and 382–626; these read TSSI…CLHK and PDNN…GKGL. 4 consecutive Calponin-homology (CH) domains span residues 122 to 238, 266 to 377, 396 to 505, and 517 to 626; these read EEEK…KVGL, LSPE…NTYP, SKEE…RRYT, and KVTD…GKGL.

In terms of assembly, monomer. Post-translationally, phosphorylated. In terms of tissue distribution, in the inner ear, it is expressed in the organ of Corti. Abundant in the utricle (at protein level).

The protein resides in the cytoplasm. The protein localises to the cell projection. It localises to the stereocilium. In terms of biological role, actin-bundling protein. In the inner ear, it is required for stereocilia formation. Mediates liquid packing of actin filaments that is necessary for stereocilia to grow to their proper dimensions. The chain is Plastin-1 (Pls1) from Mus musculus (Mouse).